The sequence spans 284 residues: MEMO1 family protein M1425_2054 (284 aa).

The protein belongs to the MEMO1 family.

This Saccharolobus islandicus (strain M.14.25 / Kamchatka #1) (Sulfolobus islandicus) protein is MEMO1 family protein M1425_2054.